The sequence spans 482 residues: ATP synthase subunit beta (482 aa).

Residue 167-174 coordinates ATP; it reads GGAGVGKT.

This sequence belongs to the ATPase alpha/beta chains family. F-type ATPases have 2 components, CF(1) - the catalytic core - and CF(0) - the membrane proton channel. CF(1) has five subunits: alpha(3), beta(3), gamma(1), delta(1), epsilon(1). CF(0) has three main subunits: a(1), b(2) and c(9-12). The alpha and beta chains form an alternating ring which encloses part of the gamma chain. CF(1) is attached to CF(0) by a central stalk formed by the gamma and epsilon chains, while a peripheral stalk is formed by the delta and b chains.

It localises to the cell membrane. The enzyme catalyses ATP + H2O + 4 H(+)(in) = ADP + phosphate + 5 H(+)(out). Functionally, produces ATP from ADP in the presence of a proton gradient across the membrane. The catalytic sites are hosted primarily by the beta subunits. In Corynebacterium aurimucosum (strain ATCC 700975 / DSM 44827 / CIP 107346 / CN-1) (Corynebacterium nigricans), this protein is ATP synthase subunit beta.